A 606-amino-acid chain; its full sequence is Armadillo repeat-containing X-linked protein 5 (606 aa).

A disordered region spans residues 1-85 (MIGSKTKRKA…KVKKKKDKTN (85 aa)). Residues 15 to 26 (GASSKPGTNSPA) are compositionally biased toward polar residues. Over residues 40 to 59 (VKAEPKEEWGNQAEARDEAV) the composition is skewed to basic and acidic residues. ARM repeat units follow at residues 349–388 (CKSR…GISP), 470–509 (VKFD…CLSK), 511–551 (QANT…NINF), and 568–606 (SELI…ILKL).

It belongs to the eutherian X-chromosome-specific Armcx family. As to expression, highly expressed in the developing neural tissues, neural crest derivatives and hind limbs.

In Mus musculus (Mouse), this protein is Armadillo repeat-containing X-linked protein 5 (Armcx5).